The following is a 196-amino-acid chain: Probable peptidyl-prolyl cis-trans isomerase (196 aa).

Positions Met-1–Ala-26 are cleaved as a signal peptide. The 166-residue stretch at Pro-29–Asp-194 folds into the PPIase cyclophilin-type domain.

This sequence belongs to the cyclophilin-type PPIase family.

It localises to the periplasm. It carries out the reaction [protein]-peptidylproline (omega=180) = [protein]-peptidylproline (omega=0). Functionally, PPIases accelerate the folding of proteins. It catalyzes the cis-trans isomerization of proline imidic peptide bonds in oligopeptides. The sequence is that of Probable peptidyl-prolyl cis-trans isomerase (ppi) from Brucella melitensis biotype 1 (strain ATCC 23456 / CCUG 17765 / NCTC 10094 / 16M).